Reading from the N-terminus, the 275-residue chain is Ditrans,polycis-undecaprenyl-diphosphate synthase ((2E,6E)-farnesyl-diphosphate specific) (275 aa).

Residue Asp-45 is part of the active site. Asp-45 contacts Mg(2+). Substrate-binding positions include 46–49 (GNGR), Trp-50, Arg-58, His-62, and 90–92 (SSE). Residue Asn-93 is the Proton acceptor of the active site. Substrate-binding positions include Trp-94, Arg-96, Arg-213, and 219-221 (RIS). Glu-232 is a binding site for Mg(2+).

It belongs to the UPP synthase family. Homodimer. Requires Mg(2+) as cofactor.

The catalysed reaction is 8 isopentenyl diphosphate + (2E,6E)-farnesyl diphosphate = di-trans,octa-cis-undecaprenyl diphosphate + 8 diphosphate. Its function is as follows. Catalyzes the sequential condensation of isopentenyl diphosphate (IPP) with (2E,6E)-farnesyl diphosphate (E,E-FPP) to yield (2Z,6Z,10Z,14Z,18Z,22Z,26Z,30Z,34E,38E)-undecaprenyl diphosphate (di-trans,octa-cis-UPP). UPP is the precursor of glycosyl carrier lipid in the biosynthesis of bacterial cell wall polysaccharide components such as peptidoglycan and lipopolysaccharide. This is Ditrans,polycis-undecaprenyl-diphosphate synthase ((2E,6E)-farnesyl-diphosphate specific) from Shewanella oneidensis (strain ATCC 700550 / JCM 31522 / CIP 106686 / LMG 19005 / NCIMB 14063 / MR-1).